The following is a 470-amino-acid chain: Cell division protein FtsP (470 aa).

A signal peptide (tat-type signal) is located at residues 1 to 29; sequence MKNCSRRQLLKTTLFSTALFSVPAPLLAA.

Belongs to the FtsP family. Post-translationally, predicted to be exported by the Tat system. The position of the signal peptide cleavage has not been experimentally proven.

It is found in the periplasm. Cell division protein that is required for growth during stress conditions. May be involved in protecting or stabilizing the divisomal assembly under conditions of stress. The protein is Cell division protein FtsP of Aggregatibacter aphrophilus (strain NJ8700) (Haemophilus aphrophilus).